The primary structure comprises 82 residues: Sec-independent protein translocase protein TatA (82 aa).

Residues 1–21 (MGSFSIWHWLIVLLIVVMVFG) form a helical membrane-spanning segment. The segment at 46-82 (GASTDDSATTSAPAGQVTNNSAAADKTTIDVEAKHKS) is disordered. Residues 49–67 (TDDSATTSAPAGQVTNNSA) show a composition bias toward polar residues. A compositionally biased stretch (basic and acidic residues) spans 72 to 82 (TTIDVEAKHKS).

This sequence belongs to the TatA/E family. In terms of assembly, the Tat system comprises two distinct complexes: a TatABC complex, containing multiple copies of TatA, TatB and TatC subunits, and a separate TatA complex, containing only TatA subunits. Substrates initially bind to the TatABC complex, which probably triggers association of the separate TatA complex to form the active translocon.

It localises to the cell inner membrane. Its function is as follows. Part of the twin-arginine translocation (Tat) system that transports large folded proteins containing a characteristic twin-arginine motif in their signal peptide across membranes. TatA could form the protein-conducting channel of the Tat system. The protein is Sec-independent protein translocase protein TatA of Acidovorax ebreus (strain TPSY) (Diaphorobacter sp. (strain TPSY)).